The chain runs to 397 residues: CCA-adding enzyme (397 aa).

2 residues coordinate ATP: G32 and R35. CTP-binding residues include G32 and R35. Residues D45 and D47 each coordinate Mg(2+). R116, D159, R162, R165, and R168 together coordinate ATP. CTP is bound by residues R116, D159, R162, R165, and R168.

It belongs to the tRNA nucleotidyltransferase/poly(A) polymerase family. Bacterial CCA-adding enzyme type 3 subfamily. As to quaternary structure, homodimer. It depends on Mg(2+) as a cofactor.

The enzyme catalyses a tRNA precursor + 2 CTP + ATP = a tRNA with a 3' CCA end + 3 diphosphate. It catalyses the reaction a tRNA with a 3' CCA end + 2 CTP + ATP = a tRNA with a 3' CCACCA end + 3 diphosphate. Its function is as follows. Catalyzes the addition and repair of the essential 3'-terminal CCA sequence in tRNAs without using a nucleic acid template. Adds these three nucleotides in the order of C, C, and A to the tRNA nucleotide-73, using CTP and ATP as substrates and producing inorganic pyrophosphate. tRNA 3'-terminal CCA addition is required both for tRNA processing and repair. Also involved in tRNA surveillance by mediating tandem CCA addition to generate a CCACCA at the 3' terminus of unstable tRNAs. While stable tRNAs receive only 3'-terminal CCA, unstable tRNAs are marked with CCACCA and rapidly degraded. This Latilactobacillus sakei subsp. sakei (strain 23K) (Lactobacillus sakei subsp. sakei) protein is CCA-adding enzyme.